The primary structure comprises 444 residues: Methylenetetrahydrofolate--tRNA-(uracil-5-)-methyltransferase TrmFO (444 aa).

9–14 (GAGMAG) contributes to the FAD binding site.

Belongs to the MnmG family. TrmFO subfamily. FAD is required as a cofactor.

It is found in the cytoplasm. It carries out the reaction uridine(54) in tRNA + (6R)-5,10-methylene-5,6,7,8-tetrahydrofolate + NADH + H(+) = 5-methyluridine(54) in tRNA + (6S)-5,6,7,8-tetrahydrofolate + NAD(+). The enzyme catalyses uridine(54) in tRNA + (6R)-5,10-methylene-5,6,7,8-tetrahydrofolate + NADPH + H(+) = 5-methyluridine(54) in tRNA + (6S)-5,6,7,8-tetrahydrofolate + NADP(+). In terms of biological role, catalyzes the folate-dependent formation of 5-methyl-uridine at position 54 (M-5-U54) in all tRNAs. The protein is Methylenetetrahydrofolate--tRNA-(uracil-5-)-methyltransferase TrmFO of Cereibacter sphaeroides (strain ATCC 17023 / DSM 158 / JCM 6121 / CCUG 31486 / LMG 2827 / NBRC 12203 / NCIMB 8253 / ATH 2.4.1.) (Rhodobacter sphaeroides).